A 32-amino-acid polypeptide reads, in one-letter code: Yop proteins translocation protein A (32 aa).

The sequence is that of Yop proteins translocation protein A (yscA) from Yersinia enterocolitica serotype O:8 / biotype 1B (strain NCTC 13174 / 8081).